The primary structure comprises 429 residues: Glutamate-1-semialdehyde 2,1-aminomutase 2 (429 aa).

N6-(pyridoxal phosphate)lysine is present on Lys268.

Belongs to the class-III pyridoxal-phosphate-dependent aminotransferase family. HemL subfamily. As to quaternary structure, homodimer. The cofactor is pyridoxal 5'-phosphate.

It localises to the cytoplasm. The enzyme catalyses (S)-4-amino-5-oxopentanoate = 5-aminolevulinate. It functions in the pathway porphyrin-containing compound metabolism; protoporphyrin-IX biosynthesis; 5-aminolevulinate from L-glutamyl-tRNA(Glu): step 2/2. This is Glutamate-1-semialdehyde 2,1-aminomutase 2 from Staphylococcus aureus (strain MSSA476).